A 220-amino-acid polypeptide reads, in one-letter code: N-(5'-phosphoribosyl)anthranilate isomerase (220 aa).

This sequence belongs to the TrpF family.

It carries out the reaction N-(5-phospho-beta-D-ribosyl)anthranilate = 1-(2-carboxyphenylamino)-1-deoxy-D-ribulose 5-phosphate. It participates in amino-acid biosynthesis; L-tryptophan biosynthesis; L-tryptophan from chorismate: step 3/5. This Gloeothece citriformis (strain PCC 7424) (Cyanothece sp. (strain PCC 7424)) protein is N-(5'-phosphoribosyl)anthranilate isomerase.